The primary structure comprises 420 residues: Acetyl-CoA acetyltransferase A, mitochondrial (420 aa).

The N-terminal 33 residues, 1–33 (MAFCGTRTAARLSHSTRALHNTHRNFASQRTLN), are a transit peptide targeting the mitochondrion. The active-site Acyl-thioester intermediate is C119. CoA contacts are provided by residues Y212, 251-253 (RVD), and K256. Y212 contacts K(+). Positions 273 and 274 each coordinate K(+). Residue S277 coordinates CoA. V374 is a binding site for K(+). Residue C406 is the Proton donor/acceptor of the active site.

It belongs to the thiolase-like superfamily. Thiolase family. As to quaternary structure, homotetramer.

The protein resides in the mitochondrion. It carries out the reaction 2 acetyl-CoA = acetoacetyl-CoA + CoA. The catalysed reaction is propanoyl-CoA + acetyl-CoA = 2-methyl-3-oxobutanoyl-CoA + CoA. It functions in the pathway lipid metabolism; fatty acid beta-oxidation. In terms of biological role, this is one of the enzymes that catalyzes the last step of the mitochondrial beta-oxidation pathway, an aerobic process breaking down fatty acids into acetyl-CoA. Using free coenzyme A/CoA, catalyzes the thiolytic cleavage of medium- to long-chain 3-oxoacyl-CoAs into acetyl-CoA and a fatty acyl-CoA shortened by two carbon atoms. The activity of the enzyme is reversible and it can also catalyze the condensation of two acetyl-CoA molecules into acetoacetyl-CoA. Thereby, it plays a major role in ketone body metabolism. This is Acetyl-CoA acetyltransferase A, mitochondrial (acat1-a) from Xenopus laevis (African clawed frog).